A 151-amino-acid polypeptide reads, in one-letter code: Macrodomain Ter protein (151 aa).

This sequence belongs to the MatP family. In terms of assembly, homodimer.

The protein localises to the cytoplasm. Required for spatial organization of the terminus region of the chromosome (Ter macrodomain) during the cell cycle. Prevents early segregation of duplicated Ter macrodomains during cell division. Binds specifically to matS, which is a 13 bp signature motif repeated within the Ter macrodomain. The sequence is that of Macrodomain Ter protein from Yersinia enterocolitica serotype O:8 / biotype 1B (strain NCTC 13174 / 8081).